Reading from the N-terminus, the 335-residue chain is Urokinase plasminogen activator surface receptor (335 aa).

The signal sequence occupies residues 1–22 (MGHPLLLPLLLLLHTCVPASWG). 3 UPAR/Ly6 domains span residues 23 to 114 (LRCM…RSRY), 115 to 213 (LECI…PQNG), and 214 to 305 (HQCY…YRKG). 3 cysteine pairs are disulfide-bonded: Cys25-Cys46, Cys28-Cys34, and Cys39-Cys67. Asn74 carries N-linked (GlcNAc...) asparagine glycosylation. 11 disulfide bridges follow: Cys93–Cys98, Cys117–Cys144, Cys120–Cys127, Cys137–Cys169, Cys175–Cys192, Cys193–Cys198, Cys216–Cys244, Cys219–Cys227, Cys237–Cys263, Cys269–Cys287, and Cys288–Cys293. N-linked (GlcNAc...) asparagine glycosylation is found at Asn184, Asn194, Asn222, Asn255, and Asn284. Gly305 is lipidated: GPI-anchor amidated glycine. Residues 306 to 335 (AAPQPGPAHLSLTITLLMTARLWGGTLLWT) constitute a propeptide, removed in mature form.

Monomer. Interacts (via the UPAR/Ly6 domains) with SRPX2. Interacts with MRC2. Interacts with FAP (seprase); the interaction occurs at the cell surface of invadopodia membrane. Interacts with SORL1 (via N-terminal ectodomain); this interaction decreases PLAUR internalization. The ternary complex composed of PLAUR-PLAU-SERPINE1 also interacts with SORL1.

The protein localises to the cell membrane. It is found in the cell projection. The protein resides in the invadopodium membrane. Its function is as follows. Acts as a receptor for urokinase plasminogen activator. Plays a role in localizing and promoting plasmin formation. Mediates the proteolysis-independent signal transduction activation effects of U-PA. It is subject to negative-feedback regulation by U-PA which cleaves it into an inactive form. The chain is Urokinase plasminogen activator surface receptor (PLAUR) from Macaca fascicularis (Crab-eating macaque).